Reading from the N-terminus, the 262-residue chain is Octanoyltransferase (262 aa).

Residues 60-248 enclose the BPL/LPL catalytic domain; that stretch reads GTADELVWLV…AFEMVFGPTR (189 aa). Substrate is bound by residues 99–106, 179–181, and 192–194; these read RGGEYTYH, AIG, and GLS. The active-site Acyl-thioester intermediate is Cys-210.

The protein belongs to the LipB family.

It is found in the cytoplasm. It carries out the reaction octanoyl-[ACP] + L-lysyl-[protein] = N(6)-octanoyl-L-lysyl-[protein] + holo-[ACP] + H(+). It functions in the pathway protein modification; protein lipoylation via endogenous pathway; protein N(6)-(lipoyl)lysine from octanoyl-[acyl-carrier-protein]: step 1/2. In terms of biological role, catalyzes the transfer of endogenously produced octanoic acid from octanoyl-acyl-carrier-protein onto the lipoyl domains of lipoate-dependent enzymes. Lipoyl-ACP can also act as a substrate although octanoyl-ACP is likely to be the physiological substrate. This is Octanoyltransferase from Sinorhizobium medicae (strain WSM419) (Ensifer medicae).